The chain runs to 260 residues: Ubiquinone/menaquinone biosynthesis C-methyltransferase UbiE (260 aa).

S-adenosyl-L-methionine contacts are provided by residues Thr-83, Asp-104, 132 to 133, and Ser-149; that span reads NA.

This sequence belongs to the class I-like SAM-binding methyltransferase superfamily. MenG/UbiE family.

The catalysed reaction is a 2-demethylmenaquinol + S-adenosyl-L-methionine = a menaquinol + S-adenosyl-L-homocysteine + H(+). The enzyme catalyses a 2-methoxy-6-(all-trans-polyprenyl)benzene-1,4-diol + S-adenosyl-L-methionine = a 5-methoxy-2-methyl-3-(all-trans-polyprenyl)benzene-1,4-diol + S-adenosyl-L-homocysteine + H(+). It functions in the pathway quinol/quinone metabolism; menaquinone biosynthesis; menaquinol from 1,4-dihydroxy-2-naphthoate: step 2/2. The protein operates within cofactor biosynthesis; ubiquinone biosynthesis. Its function is as follows. Methyltransferase required for the conversion of demethylmenaquinol (DMKH2) to menaquinol (MKH2) and the conversion of 2-polyprenyl-6-methoxy-1,4-benzoquinol (DDMQH2) to 2-polyprenyl-3-methyl-6-methoxy-1,4-benzoquinol (DMQH2). This is Ubiquinone/menaquinone biosynthesis C-methyltransferase UbiE from Vibrio vulnificus (strain CMCP6).